Reading from the N-terminus, the 353-residue chain is Uroporphyrinogen decarboxylase (353 aa).

Substrate contacts are provided by residues 30–34 (RQAGR), D79, Y154, S209, and H332.

It belongs to the uroporphyrinogen decarboxylase family. In terms of assembly, homodimer.

It localises to the cytoplasm. The catalysed reaction is uroporphyrinogen III + 4 H(+) = coproporphyrinogen III + 4 CO2. Its pathway is porphyrin-containing compound metabolism; protoporphyrin-IX biosynthesis; coproporphyrinogen-III from 5-aminolevulinate: step 4/4. In terms of biological role, catalyzes the decarboxylation of four acetate groups of uroporphyrinogen-III to yield coproporphyrinogen-III. This is Uroporphyrinogen decarboxylase from Mycobacterium ulcerans (strain Agy99).